The sequence spans 131 residues: MSGVYLTVPQAPELINERIPSFTASCSEVAPEHSEMPLTVIYIVLPVVMESQLESTLDILWIPESYSTLMQENMGFPYHGRLQILAGARDSLYLGRDAVVLLCPSLPFPTFTKWLIQVILLLSYWGSGGFG.

The protein localises to the mitochondrion. This is an uncharacterized protein from Arabidopsis thaliana (Mouse-ear cress).